Consider the following 206-residue polypeptide: Uridine kinase (206 aa).

Residue 9–16 (GGSGSGKT) coordinates ATP.

It belongs to the uridine kinase family.

The protein localises to the cytoplasm. It catalyses the reaction uridine + ATP = UMP + ADP + H(+). The catalysed reaction is cytidine + ATP = CMP + ADP + H(+). It functions in the pathway pyrimidine metabolism; CTP biosynthesis via salvage pathway; CTP from cytidine: step 1/3. Its pathway is pyrimidine metabolism; UMP biosynthesis via salvage pathway; UMP from uridine: step 1/1. This is Uridine kinase from Borrelia duttonii (strain Ly).